The sequence spans 324 residues: Serine racemase (324 aa).

Residues Ser-32, Lys-51, and Thr-52 each coordinate ATP. Lys-56 functions as the Proton acceptor in the catalytic mechanism. Position 56 is an N6-(pyridoxal phosphate)lysine (Lys-56). A Ca(2+)-binding site is contributed by Thr-78. Ser-81 serves as the catalytic Proton acceptor. Pyridoxal 5'-phosphate is bound at residue Asn-83. Residues Gln-86 and Tyr-118 each contribute to the ATP site. Asp-175 contributes to the Mg(2+) binding site. Pyridoxal 5'-phosphate contacts are provided by Gly-182, Gly-183, Gly-184, and Gly-185. The Ca(2+) site is built by Glu-207, Ala-211, and Asp-213. Mg(2+) is bound by residues Glu-207, Ala-211, and Asp-213. Residues Glu-207, Ala-211, and Asp-213 each contribute to the Mn(2+) site. Position 277 (Lys-277) interacts with ATP. Residue Ser-310 participates in pyridoxal 5'-phosphate binding. Asn-313 contacts ATP.

It belongs to the serine/threonine dehydratase family. In terms of assembly, homodimer. The cofactor is Mg(2+). Mn(2+) serves as cofactor. Ca(2+) is required as a cofactor. Requires pyridoxal 5'-phosphate as cofactor.

The enzyme catalyses L-serine = D-serine. The catalysed reaction is L-serine = pyruvate + NH4(+). It catalyses the reaction D-serine = pyruvate + NH4(+). Catalyzes the synthesis of D-serine from L-serine. Has dehydratase activity towards both L-serine and D-serine. The chain is Serine racemase (srr) from Dictyostelium discoideum (Social amoeba).